The following is a 663-amino-acid chain: Epithelial sodium channel subunit gamma-2 (663 aa).

The Cytoplasmic portion of the chain corresponds to 1–55; that stretch reads MSNSGKKLTQKLKKNLPVTGPQAPTLYELMQWYCLNTNTHGCRRIVVSKGRLRRW. The helical transmembrane segment at 56 to 76 threads the bilayer; sequence IWIVLTLIAVALIFWQCALLL. Residues 77–544 lie on the Extracellular side of the membrane; sequence MTYYSVSASI…GGQLGLWMSC (468 aa). Disulfide bonds link Cys101/Cys286, Cys209/Cys217, Cys263/Cys270, Cys375/Cys460, Cys397/Cys456, Cys401/Cys452, Cys410/Cys437, and Cys412/Cys426. The helical transmembrane segment at 545 to 565 threads the bilayer; the sequence is SMVCGLEIVEVFFIDSFWVIL. The Cytoplasmic segment spans residues 566 to 663; sequence RQKWHKLCNW…IDSDEDVERF (98 aa).

It belongs to the amiloride-sensitive sodium channel (TC 1.A.6) family. SCNN1G subfamily. As to quaternary structure, component of the heterotrimeric epithelial sodium channel (ENaC) composed of an alpha/SCNN1A, a beta/SCNN1B and a gamma/SCNN1G subunit.

Its subcellular location is the apical cell membrane. It catalyses the reaction Na(+)(in) = Na(+)(out). With respect to regulation, originally identified and characterized by its inhibition by the diuretic drug amiloride. In terms of biological role, this is one of the three pore-forming subunits of the heterotrimeric epithelial sodium channel (ENaC), a critical regulator of sodium balance and fluid homeostasis. ENaC operates in epithelial tissues, where it mediates the electrodiffusion of sodium ions from extracellular fluid through the apical membrane of cells, with water following osmotically. The sequence is that of Epithelial sodium channel subunit gamma-2 (scnn1g-b) from Xenopus laevis (African clawed frog).